Consider the following 319-residue polypeptide: MSLNFLEFEKPIAELEAKIEALRDVSRHGGDTAVDLDKEIEQLEKKSLELKQKIFSDLGAWQVAQLARHPQRPYTKDYLEHAFTEFEEMAGDRAYADDKAIVGGMARLNGRPVMVIGHQKGRETKEKVIRNFGMPKPEGYRKALRLMETAERFNMPIITFIDTAGAYPGVGAEERGQSEAIAKNLKVMAGLSVPVICNVVGEGGSGGALAIGVGDYVNMLQYSTYSVISPEGCASILWRDSDKAPQAAEAMGLVAPRLKELELIDEIIPEPLGGAHRDPIQTAQNMKDMLVKQLEELEQFDNEALLERRYQRLMSYGYC.

The 262-residue stretch at 35 to 296 folds into the CoA carboxyltransferase C-terminal domain; that stretch reads DLDKEIEQLE…KDMLVKQLEE (262 aa).

This sequence belongs to the AccA family. In terms of assembly, acetyl-CoA carboxylase is a heterohexamer composed of biotin carboxyl carrier protein (AccB), biotin carboxylase (AccC) and two subunits each of ACCase subunit alpha (AccA) and ACCase subunit beta (AccD).

It localises to the cytoplasm. The catalysed reaction is N(6)-carboxybiotinyl-L-lysyl-[protein] + acetyl-CoA = N(6)-biotinyl-L-lysyl-[protein] + malonyl-CoA. The protein operates within lipid metabolism; malonyl-CoA biosynthesis; malonyl-CoA from acetyl-CoA: step 1/1. Functionally, component of the acetyl coenzyme A carboxylase (ACC) complex. First, biotin carboxylase catalyzes the carboxylation of biotin on its carrier protein (BCCP) and then the CO(2) group is transferred by the carboxyltransferase to acetyl-CoA to form malonyl-CoA. The protein is Acetyl-coenzyme A carboxylase carboxyl transferase subunit alpha of Vibrio atlanticus (strain LGP32) (Vibrio splendidus (strain Mel32)).